Reading from the N-terminus, the 140-residue chain is Fluoride-specific ion channel FluC 2 (140 aa).

The next 4 helical transmembrane spans lie at 7-27, 45-65, 77-97, and 106-126; these read VPPLDPAILLAISLGGGLGAL, WATFVVNVTGCFAIGVLMVLV, PFAGVGLLGGFTTFSTYGLEI, and VLEALGYLAGTVLAALAGVVL. The Na(+) site is built by G85 and T88.

The protein belongs to the fluoride channel Fluc/FEX (TC 1.A.43) family.

It is found in the cell membrane. It carries out the reaction fluoride(in) = fluoride(out). With respect to regulation, na(+) is not transported, but it plays an essential structural role and its presence is essential for fluoride channel function. In terms of biological role, fluoride-specific ion channel. Important for reducing fluoride concentration in the cell, thus reducing its toxicity. The chain is Fluoride-specific ion channel FluC 2 from Nocardia farcinica (strain IFM 10152).